The following is a 108-amino-acid chain: uncharacterized protein (108 aa).

An N-terminal signal peptide occupies residues 1 to 24 (MNLWEFRFGKSFLFIPNFIMKVLA).

It to M.jannaschii MJ0803.

This is an uncharacterized protein from Methanocaldococcus jannaschii (strain ATCC 43067 / DSM 2661 / JAL-1 / JCM 10045 / NBRC 100440) (Methanococcus jannaschii).